The following is a 577-amino-acid chain: Lysine-specific demethylase 7B (577 aa).

A PHD-type zinc finger spans residues 5–56; sequence QLYCVCRQPYDVSRFMIECDICKDWFHGSCVEVEEHYAVDIDVYHCPNCDVH. The JmjC domain maps to 198–354; sequence FSDTKMAELV…MQLRCYEMER (157 aa). Thr-247 contributes to the substrate binding site. Fe cation is bound by residues His-250 and Asp-252. Lys-267 provides a ligand contact to substrate. His-322 is a Fe cation binding site. A disordered region spans residues 460–513; the sequence is CPSTRSAHERGSHARKTARRLRGHHHHHHRHHHHHHHHHHHNHQHSDGPKAPSH. Basic residues predominate over residues 472–502; the sequence is HARKTARRLRGHHHHHHRHHHHHHHHHHHNH.

It belongs to the JHDM1 histone demethylase family. JHDM1D subfamily. It depends on Fe(2+) as a cofactor. As to expression, predominantly expressed in brain.

The protein localises to the nucleus. Its function is as follows. Histone demethylase required for brain development. Specifically demethylates dimethylated 'Lys-9' and 'Lys-27' (H3K9me2 and H3K27me2, respectively) of histone H3 and monomethylated histone H4 'Lys-20' residue (H4K20Me1), thereby playing a central role in histone code. The sequence is that of Lysine-specific demethylase 7B (jhdm1db) from Danio rerio (Zebrafish).